A 507-amino-acid chain; its full sequence is Glutamate--tRNA ligase (507 aa).

The short motif at P14–G24 is the 'HIGH' region element. The short motif at K261–R265 is the 'KMSKS' region element. K264 contacts ATP.

Belongs to the class-I aminoacyl-tRNA synthetase family. Glutamate--tRNA ligase type 1 subfamily. As to quaternary structure, monomer.

The protein resides in the cytoplasm. The catalysed reaction is tRNA(Glu) + L-glutamate + ATP = L-glutamyl-tRNA(Glu) + AMP + diphosphate. In terms of biological role, catalyzes the attachment of glutamate to tRNA(Glu) in a two-step reaction: glutamate is first activated by ATP to form Glu-AMP and then transferred to the acceptor end of tRNA(Glu). This chain is Glutamate--tRNA ligase, found in Roseiflexus castenholzii (strain DSM 13941 / HLO8).